The sequence spans 154 residues: Ascorbate-specific PTS system EIIA component (154 aa).

The PTS EIIA type-2 domain maps to serine 6–threonine 150. The active-site Tele-phosphohistidine intermediate is histidine 68. Histidine 68 carries the phosphohistidine modification.

The protein localises to the cytoplasm. Its function is as follows. The phosphoenolpyruvate-dependent sugar phosphotransferase system (sugar PTS), a major carbohydrate active transport system, catalyzes the phosphorylation of incoming sugar substrates concomitantly with their translocation across the cell membrane. The enzyme II UlaABC PTS system is involved in ascorbate transport. In Escherichia coli O157:H7, this protein is Ascorbate-specific PTS system EIIA component (ulaC).